Consider the following 482-residue polypeptide: Carbamoyl phosphate synthase large chain, N-terminal section (482 aa).

Positions 1–398 (MESIKKVMVF…ALQKAIRSLD (398 aa)) are carboxyphosphate synthetic domain. Arg-126, Arg-166, Gly-172, Gly-173, Glu-205, Val-207, Glu-212, Gly-238, Ile-239, His-240, Gln-281, and Glu-295 together coordinate ATP. Residues 130–324 (AEAMAEINEP…IARIAAKIAI (195 aa)) form the ATP-grasp domain. Residues Gln-281, Glu-295, and Asn-297 each contribute to the Mg(2+) site. The Mn(2+) site is built by Gln-281, Glu-295, and Asn-297.

Belongs to the CarB family. As to quaternary structure, composed of two chains; the small (or glutamine) chain promotes the hydrolysis of glutamine to ammonia, which is used by the large (or ammonia) chain to synthesize carbamoyl phosphate. Tetramer of heterodimers (alpha,beta)4. Mg(2+) serves as cofactor. It depends on Mn(2+) as a cofactor.

It carries out the reaction hydrogencarbonate + L-glutamine + 2 ATP + H2O = carbamoyl phosphate + L-glutamate + 2 ADP + phosphate + 2 H(+). It catalyses the reaction hydrogencarbonate + NH4(+) + 2 ATP = carbamoyl phosphate + 2 ADP + phosphate + 2 H(+). The protein operates within amino-acid biosynthesis; L-arginine biosynthesis; carbamoyl phosphate from bicarbonate: step 1/1. Its pathway is pyrimidine metabolism; UMP biosynthesis via de novo pathway; (S)-dihydroorotate from bicarbonate: step 1/3. Large subunit of the glutamine-dependent carbamoyl phosphate synthetase (CPSase). CPSase catalyzes the formation of carbamoyl phosphate from the ammonia moiety of glutamine, carbonate, and phosphate donated by ATP, constituting the first step of 2 biosynthetic pathways, one leading to arginine and/or urea and the other to pyrimidine nucleotides. The large subunit (synthetase) binds the substrates ammonia (free or transferred from glutamine from the small subunit), hydrogencarbonate and ATP and carries out an ATP-coupled ligase reaction, activating hydrogencarbonate by forming carboxy phosphate which reacts with ammonia to form carbamoyl phosphate. This is Carbamoyl phosphate synthase large chain, N-terminal section (carB1) from Methanocaldococcus jannaschii (strain ATCC 43067 / DSM 2661 / JAL-1 / JCM 10045 / NBRC 100440) (Methanococcus jannaschii).